A 224-amino-acid polypeptide reads, in one-letter code: Flagellar L-ring protein (224 aa).

Positions 1–15 (MIKYIALASVVLLVG) are cleaved as a signal peptide. The N-palmitoyl cysteine moiety is linked to residue cysteine 16. Cysteine 16 carries S-diacylglycerol cysteine lipidation.

It belongs to the FlgH family. The basal body constitutes a major portion of the flagellar organelle and consists of four rings (L,P,S, and M) mounted on a central rod.

It localises to the cell outer membrane. Its subcellular location is the bacterial flagellum basal body. Assembles around the rod to form the L-ring and probably protects the motor/basal body from shearing forces during rotation. The protein is Flagellar L-ring protein of Shewanella frigidimarina (strain NCIMB 400).